Reading from the N-terminus, the 88-residue chain is MDLFKLFSGKPSSKEVAKDRLKLILIHDRSSIAPELLEVMKSDILKVISKYVIIDDDEVEVRLTKTEEVDASSPALIASIPIKKMKQR.

It belongs to the MinE family.

Its function is as follows. Prevents the cell division inhibition by proteins MinC and MinD at internal division sites while permitting inhibition at polar sites. This ensures cell division at the proper site by restricting the formation of a division septum at the midpoint of the long axis of the cell. The protein is Cell division topological specificity factor of Clostridium novyi (strain NT).